A 511-amino-acid polypeptide reads, in one-letter code: MKKRALVSVSNKTGVVEFVKGLLEQGIEVISTGGTKKLLEENGLQVMGISEVTGFPEIMDGRVKTLHPNIHGGLLAVRDNEAHVAEMSELGIQLIDFVVVNLYPFKETIAKPDVTFADAIENIDIGGPTMIRSAAKNHKFVSVIVDPADYDVVLAELKEKGEVTDETKRKLAAKVFRHTAAYDALISNYLTEQMGEESPEILTVTFEKKQDLRYGENPHQKATFYKAPFAVASSVAYAEQLHGKELSYNNINDADAALSIVKEFTEPAVVAVKHMNPCGVGVGTDIHEAYTRAYEADPVSIFGGIIAANREIDKRVAEKLHEIFLEIIIAPSFSKEALEVLQSKKNLRLLTVNIEKTTSASKKLTSVQGGLLVQEEDTLALNEETIIIPTKREPTEQEWNDLKLAWKVVKHVKSNAIVLAKDNMTIGVGAGQMNRVGSAKIAISQAGSKAQGSALASDAFFPMPDTVEEAAKAGITAIIQPGGSIRDEDSIKKADEYGITMVFTGVRHFKH.

One can recognise an MGS-like domain in the interval 1 to 145 (MKKRALVSVS…KNHKFVSVIV (145 aa)).

The protein belongs to the PurH family.

It catalyses the reaction (6R)-10-formyltetrahydrofolate + 5-amino-1-(5-phospho-beta-D-ribosyl)imidazole-4-carboxamide = 5-formamido-1-(5-phospho-D-ribosyl)imidazole-4-carboxamide + (6S)-5,6,7,8-tetrahydrofolate. It carries out the reaction IMP + H2O = 5-formamido-1-(5-phospho-D-ribosyl)imidazole-4-carboxamide. It participates in purine metabolism; IMP biosynthesis via de novo pathway; 5-formamido-1-(5-phospho-D-ribosyl)imidazole-4-carboxamide from 5-amino-1-(5-phospho-D-ribosyl)imidazole-4-carboxamide (10-formyl THF route): step 1/1. It functions in the pathway purine metabolism; IMP biosynthesis via de novo pathway; IMP from 5-formamido-1-(5-phospho-D-ribosyl)imidazole-4-carboxamide: step 1/1. This Bacillus cytotoxicus (strain DSM 22905 / CIP 110041 / 391-98 / NVH 391-98) protein is Bifunctional purine biosynthesis protein PurH.